The following is a 308-amino-acid chain: UDP-N-acetylenolpyruvoylglucosamine reductase (308 aa).

The 165-residue stretch at 32–196 (VGGPAARLYK…ISAKLQLSPG (165 aa)) folds into the FAD-binding PCMH-type domain. Residue R176 is part of the active site. S225 (proton donor) is an active-site residue. E296 is an active-site residue.

The protein belongs to the MurB family. FAD is required as a cofactor.

It localises to the cytoplasm. It catalyses the reaction UDP-N-acetyl-alpha-D-muramate + NADP(+) = UDP-N-acetyl-3-O-(1-carboxyvinyl)-alpha-D-glucosamine + NADPH + H(+). Its pathway is cell wall biogenesis; peptidoglycan biosynthesis. In terms of biological role, cell wall formation. The sequence is that of UDP-N-acetylenolpyruvoylglucosamine reductase from Legionella pneumophila (strain Lens).